The primary structure comprises 397 residues: Tryptophan synthase beta chain (397 aa).

At Lys-87 the chain carries N6-(pyridoxal phosphate)lysine.

The protein belongs to the TrpB family. Tetramer of two alpha and two beta chains. The cofactor is pyridoxal 5'-phosphate.

It catalyses the reaction (1S,2R)-1-C-(indol-3-yl)glycerol 3-phosphate + L-serine = D-glyceraldehyde 3-phosphate + L-tryptophan + H2O. It participates in amino-acid biosynthesis; L-tryptophan biosynthesis; L-tryptophan from chorismate: step 5/5. In terms of biological role, the beta subunit is responsible for the synthesis of L-tryptophan from indole and L-serine. The polypeptide is Tryptophan synthase beta chain (Escherichia coli O17:K52:H18 (strain UMN026 / ExPEC)).